The chain runs to 275 residues: Myoblast determination protein 1 homolog (275 aa).

The 52-residue stretch at 84–135 (DRRKAATMRERRRLSKVNDAFETLKRCTSTNPNQRLPKVEILRNAISYIESL) folds into the bHLH domain. A disordered region spans residues 234-275 (EGHEESPCSPHEGSVLSDTGTTAPSPTSCPQQQAQETIYQVL). The span at 249–275 (LSDTGTTAPSPTSCPQQQAQETIYQVL) shows a compositional bias: polar residues.

In terms of assembly, efficient DNA binding requires dimerization with another bHLH protein. From mid-gastrula to just before somite formation, expressed in cells adjacent to axial mesoderm. Subsequently, during the anterior-to-posterior wave of somite formation and maturation, expressed within particular regions of each somite. Expressed in both muscle and non-muscle cells.

It is found in the nucleus. Functionally, may act as a transcriptional activator that promotes transcription of muscle-specific target genes and plays a role in muscle differentiation. The protein is Myoblast determination protein 1 homolog (myod1) of Danio rerio (Zebrafish).